Here is a 122-residue protein sequence, read N- to C-terminus: Large ribosomal subunit protein uL14 (122 aa).

It belongs to the universal ribosomal protein uL14 family. In terms of assembly, part of the 50S ribosomal subunit. Forms a cluster with proteins L3 and L19. In the 70S ribosome, L14 and L19 interact and together make contacts with the 16S rRNA in bridges B5 and B8.

In terms of biological role, binds to 23S rRNA. Forms part of two intersubunit bridges in the 70S ribosome. The chain is Large ribosomal subunit protein uL14 from Pseudomonas fluorescens (strain ATCC BAA-477 / NRRL B-23932 / Pf-5).